Reading from the N-terminus, the 399-residue chain is Succinyl-diaminopimelate desuccinylase (399 aa).

His-80 serves as a coordination point for Zn(2+). Asp-82 is an active-site residue. Asp-113 provides a ligand contact to Zn(2+). Glu-147 acts as the Proton acceptor in catalysis. Glu-148, Glu-176, and His-366 together coordinate Zn(2+).

The protein belongs to the peptidase M20A family. DapE subfamily. Homodimer. The cofactor is Zn(2+). It depends on Co(2+) as a cofactor.

It catalyses the reaction N-succinyl-(2S,6S)-2,6-diaminopimelate + H2O = (2S,6S)-2,6-diaminopimelate + succinate. It functions in the pathway amino-acid biosynthesis; L-lysine biosynthesis via DAP pathway; LL-2,6-diaminopimelate from (S)-tetrahydrodipicolinate (succinylase route): step 3/3. Functionally, catalyzes the hydrolysis of N-succinyl-L,L-diaminopimelic acid (SDAP), forming succinate and LL-2,6-diaminopimelate (DAP), an intermediate involved in the bacterial biosynthesis of lysine and meso-diaminopimelic acid, an essential component of bacterial cell walls. This is Succinyl-diaminopimelate desuccinylase from Colwellia psychrerythraea (strain 34H / ATCC BAA-681) (Vibrio psychroerythus).